We begin with the raw amino-acid sequence, 122 residues long: Large ribosomal subunit protein uL14c (122 aa).

This sequence belongs to the universal ribosomal protein uL14 family. As to quaternary structure, part of the 50S ribosomal subunit.

The protein resides in the plastid. It localises to the chloroplast. Binds to 23S rRNA. This chain is Large ribosomal subunit protein uL14c, found in Capsella bursa-pastoris (Shepherd's purse).